The sequence spans 621 residues: tRNA uridine 5-carboxymethylaminomethyl modification enzyme MnmG (621 aa).

8-13 lines the FAD pocket; that stretch reads GAGHAG. Position 269-283 (269-283) interacts with NAD(+); that stretch reads GPRYCPSVEDKIFRF.

Belongs to the MnmG family. Homodimer. Heterotetramer of two MnmE and two MnmG subunits. It depends on FAD as a cofactor.

Its subcellular location is the cytoplasm. Its function is as follows. NAD-binding protein involved in the addition of a carboxymethylaminomethyl (cmnm) group at the wobble position (U34) of certain tRNAs, forming tRNA-cmnm(5)s(2)U34. The sequence is that of tRNA uridine 5-carboxymethylaminomethyl modification enzyme MnmG from Chlorobium phaeobacteroides (strain DSM 266 / SMG 266 / 2430).